The sequence spans 130 residues: Histone H2A type 2-B (130 aa).

A disordered region spans residues 1 to 22; the sequence is MSGRGKQGGKARAKAKSRSSRA. Ser2 bears the N-acetylserine mark. Ser2 is modified (phosphoserine; by RPS6KA5). Residue Arg4 is modified to Citrulline; alternate. Arg4 carries the post-translational modification Symmetric dimethylarginine; by PRMT5; alternate. An N6-(2-hydroxyisobutyryl)lysine; alternate mark is found at Lys6 and Lys10. Residue Lys6 is modified to N6-(beta-hydroxybutyryl)lysine; alternate. The segment covering 7–19 has biased composition (basic residues); it reads QGGKARAKAKSRS. The residue at position 10 (Lys10) is an N6-lactoyllysine; alternate. At Lys10 the chain carries N6-succinyllysine; alternate. Residues Lys14 and Lys16 each participate in a glycyl lysine isopeptide (Lys-Gly) (interchain with G-Cter in ubiquitin) cross-link. Lys37 is subject to N6-(2-hydroxyisobutyryl)lysine; alternate. Lys37 bears the N6-(beta-hydroxybutyryl)lysine; alternate mark. Lys37 carries the post-translational modification N6-crotonyllysine; alternate. Residues Lys75 and Lys76 each carry the N6-(2-hydroxyisobutyryl)lysine modification. Lys96 carries the N6-(2-hydroxyisobutyryl)lysine; alternate modification. Position 96 is an N6-succinyllysine; alternate (Lys96). At Lys96 the chain carries N6-glutaryllysine; alternate. N5-methylglutamine is present on Gln105. N6-(2-hydroxyisobutyryl)lysine; alternate is present on Lys119. N6-crotonyllysine; alternate occurs at positions 119 and 120. N6-glutaryllysine; alternate occurs at positions 119 and 120. Lys120 bears the N6-(beta-hydroxybutyryl)lysine; alternate mark. Lys120 participates in a covalent cross-link: Glycyl lysine isopeptide (Lys-Gly) (interchain with G-Cter in ubiquitin); alternate. Phosphothreonine; by DCAF1 is present on Thr121.

It belongs to the histone H2A family. The nucleosome is a histone octamer containing two molecules each of H2A, H2B, H3 and H4 assembled in one H3-H4 heterotetramer and two H2A-H2B heterodimers. The octamer wraps approximately 147 bp of DNA. In terms of processing, deiminated on Arg-4 in granulocytes upon calcium entry. Post-translationally, monoubiquitination of Lys-120 (H2AK119Ub) by RING1, TRIM37 and RNF2/RING2 complex gives a specific tag for epigenetic transcriptional repression and participates in X chromosome inactivation of female mammals. It is involved in the initiation of both imprinted and random X inactivation. Ubiquitinated H2A is enriched in inactive X chromosome chromatin. Ubiquitination of H2A functions downstream of methylation of 'Lys-27' of histone H3 (H3K27me). H2AK119Ub by RNF2/RING2 can also be induced by ultraviolet and may be involved in DNA repair. Following DNA double-strand breaks (DSBs), it is ubiquitinated through 'Lys-63' linkage of ubiquitin moieties by the E2 ligase UBE2N and the E3 ligases RNF8 and RNF168, leading to the recruitment of repair proteins to sites of DNA damage. Ubiquitination at Lys-14 and Lys-16 (H2AK13Ub and H2AK15Ub, respectively) in response to DNA damage is initiated by RNF168 that mediates monoubiquitination at these 2 sites, and 'Lys-63'-linked ubiquitin are then conjugated to monoubiquitin; RNF8 is able to extend 'Lys-63'-linked ubiquitin chains in vitro. Deubiquitinated by USP51 at Lys-14 and Lys-16 (H2AK13Ub and H2AK15Ub, respectively) after damaged DNA is repaired. H2AK119Ub and ionizing radiation-induced 'Lys-63'-linked ubiquitination (H2AK13Ub and H2AK15Ub) are distinct events. Phosphorylation on Ser-2 (H2AS1ph) is enhanced during mitosis. Phosphorylation on Ser-2 by RPS6KA5/MSK1 directly represses transcription. Acetylation of H3 inhibits Ser-2 phosphorylation by RPS6KA5/MSK1. Phosphorylation at Thr-121 (H2AT120ph) by DCAF1 is present in the regulatory region of many tumor suppresor genes and down-regulates their transcription. In terms of processing, symmetric dimethylation on Arg-4 by the PRDM1/PRMT5 complex may play a crucial role in the germ-cell lineage. Post-translationally, glutamine methylation at Gln-105 (H2AQ104me) by FBL is specifically dedicated to polymerase I. It is present at 35S ribosomal DNA locus and impairs binding of the FACT complex. Crotonylation (Kcr) is specifically present in male germ cells and marks testis-specific genes in post-meiotic cells, including X-linked genes that escape sex chromosome inactivation in haploid cells. Crotonylation marks active promoters and enhancers and confers resistance to transcriptional repressors. It is also associated with post-meiotically activated genes on autosomes. In terms of processing, hydroxybutyrylation of histones is induced by starvation. Post-translationally, lactylated in macrophages by EP300/P300 by using lactoyl-CoA directly derived from endogenous or exogenous lactate, leading to stimulates gene transcription.

It is found in the nucleus. The protein resides in the chromosome. Functionally, core component of nucleosome. Nucleosomes wrap and compact DNA into chromatin, limiting DNA accessibility to the cellular machineries which require DNA as a template. Histones thereby play a central role in transcription regulation, DNA repair, DNA replication and chromosomal stability. DNA accessibility is regulated via a complex set of post-translational modifications of histones, also called histone code, and nucleosome remodeling. This Mus musculus (Mouse) protein is Histone H2A type 2-B.